The primary structure comprises 1163 residues: Guanylate cyclase 32E (1163 aa).

Positions 1–25 (MPGPCASAAAFSCILVLLLLGCQRS) are cleaved as a signal peptide. Residues 29–469 (AAGATVSSMR…LCPRKKLDWR (441 aa)) lie on the Extracellular side of the membrane. N-linked (GlcNAc...) asparagine glycans are attached at residues asparagine 147, asparagine 206, asparagine 368, and asparagine 390. A helical membrane pass occupies residues 470-490 (YLVSGPLCALVVVVAIALLIK). Residues 491–1163 (HYRYEQTLAG…RSAPSITFRL (673 aa)) lie on the Cytoplasmic side of the membrane. Residues 507–800 (MKDVTVINLG…IRLVRMHLKE (294 aa)) form the Protein kinase domain. Residues 873-1003 (TILFSDIVGF…DTVNTASRME (131 aa)) enclose the Guanylate cyclase domain.

The protein belongs to the adenylyl cyclase class-4/guanylyl cyclase family.

Its subcellular location is the membrane. It carries out the reaction GTP = 3',5'-cyclic GMP + diphosphate. The sequence is that of Guanylate cyclase 32E (Gyc32E) from Drosophila melanogaster (Fruit fly).